Reading from the N-terminus, the 291-residue chain is Oxidative stress-responsive serine-rich protein 1 (291 aa).

The disordered stretch occupies residues 44–139 (RTTVDDTKPK…STGENSTSLD (96 aa)). Residues 65-83 (STRKSSRGAVRIQRRRRSK) are compositionally biased toward basic residues. Composition is skewed to polar residues over residues 95–113 (CSTT…SQTE) and 127–139 (KEFS…TSLD). The residue at position 143 (T143) is a Phosphothreonine.

As to expression, ubiquitous with high level in testis, placenta and cardiac myocytes. In terms of tissue distribution, expressed in testis, unpreganant uterus and cardiac myocytes.

This chain is Oxidative stress-responsive serine-rich protein 1 (Oser1), found in Rattus norvegicus (Rat).